The chain runs to 122 residues: LYR motif-containing protein 1 (122 aa).

It belongs to the complex I LYR family.

May promote cell proliferation and inhibition of apoptosis of preadipocytes. In Mus musculus (Mouse), this protein is LYR motif-containing protein 1 (Lyrm1).